The sequence spans 297 residues: 3-methyl-2-oxobutanoate hydroxymethyltransferase (297 aa).

Residues 1–15 (MSEQISEQSEQNVYG) are compositionally biased toward polar residues. The tract at residues 1-40 (MSEQISEQSEQNVYGASSPVPAGESSPSAASAPRTKVRTH) is disordered. Over residues 16–33 (ASSPVPAGESSPSAASAP) the composition is skewed to low complexity. Positions 78 and 117 each coordinate Mg(2+). Residues 78 to 79 (DS), Asp117, and Lys147 contribute to the 3-methyl-2-oxobutanoate site. Position 149 (Glu149) interacts with Mg(2+). Glu215 (proton acceptor) is an active-site residue.

It belongs to the PanB family. As to quaternary structure, homodecamer; pentamer of dimers. It depends on Mg(2+) as a cofactor.

Its subcellular location is the cytoplasm. It catalyses the reaction 3-methyl-2-oxobutanoate + (6R)-5,10-methylene-5,6,7,8-tetrahydrofolate + H2O = 2-dehydropantoate + (6S)-5,6,7,8-tetrahydrofolate. It participates in cofactor biosynthesis; (R)-pantothenate biosynthesis; (R)-pantoate from 3-methyl-2-oxobutanoate: step 1/2. Its function is as follows. Catalyzes the reversible reaction in which hydroxymethyl group from 5,10-methylenetetrahydrofolate is transferred onto alpha-ketoisovalerate to form ketopantoate. The chain is 3-methyl-2-oxobutanoate hydroxymethyltransferase from Mycobacterium marinum (strain ATCC BAA-535 / M).